A 514-amino-acid polypeptide reads, in one-letter code: Bifunctional purine biosynthesis protein PurH (514 aa).

Residues 1–146 (MARLALLSVS…KNFAHLAVLC (146 aa)) form the MGS-like domain.

Belongs to the PurH family.

It catalyses the reaction (6R)-10-formyltetrahydrofolate + 5-amino-1-(5-phospho-beta-D-ribosyl)imidazole-4-carboxamide = 5-formamido-1-(5-phospho-D-ribosyl)imidazole-4-carboxamide + (6S)-5,6,7,8-tetrahydrofolate. It carries out the reaction IMP + H2O = 5-formamido-1-(5-phospho-D-ribosyl)imidazole-4-carboxamide. The protein operates within purine metabolism; IMP biosynthesis via de novo pathway; 5-formamido-1-(5-phospho-D-ribosyl)imidazole-4-carboxamide from 5-amino-1-(5-phospho-D-ribosyl)imidazole-4-carboxamide (10-formyl THF route): step 1/1. It participates in purine metabolism; IMP biosynthesis via de novo pathway; IMP from 5-formamido-1-(5-phospho-D-ribosyl)imidazole-4-carboxamide: step 1/1. This is Bifunctional purine biosynthesis protein PurH from Nostoc punctiforme (strain ATCC 29133 / PCC 73102).